The following is a 535-amino-acid chain: Intercellular adhesion molecule 1 (535 aa).

An N-terminal signal peptide occupies residues 1-27 (MALGAAPAAQLALLALLGTLLPGPGGA). Over 28 to 480 (GISIHPSKAI…LNVLHGQNIL (453 aa)) the chain is Extracellular. The Ig-like C2-type 1 domain occupies 41–102 (GDSLTVNCSN…SNCHKEQTIA (62 aa)). Asparagine 47 carries an N-linked (GlcNAc...) asparagine glycan. Disulfide bonds link cysteine 48–cysteine 91 and cysteine 52–cysteine 95. N-linked (GlcNAc...) asparagine glycosylation is found at asparagine 105 and asparagine 131. Positions 127–193 (GEELNLSCLV…FSCRWELDLR (67 aa)) constitute an Ig-like C2-type 2 domain. Cysteine 134 and cysteine 186 are disulfide-bonded. Positions 151-153 (RGE) match the Cell attachment site; atypical motif. N-linked (GlcNAc...) asparagine glycans are attached at residues asparagine 183, asparagine 202, asparagine 236, asparagine 262, asparagine 302, asparagine 341, asparagine 357, asparagine 366, asparagine 404, and asparagine 428. The 66-residue stretch at 230–295 (GSRWPVNCTL…LKCSVTLGEV (66 aa)) folds into the Ig-like C2-type 3 domain. The cysteines at positions 237 and 288 are disulfide-linked. Positions 323–376 (WTTVTVECVTRDGAVVKLNGTSAVPPGPRAQLKLNASASDHRSNFSCSAALEIA) constitute an Ig-like C2-type 4 domain. Disulfide bonds link cysteine 330–cysteine 369, cysteine 401–cysteine 417, cysteine 417–cysteine 456, and cysteine 429–cysteine 456. Residues 410 to 463 (GSEQTLKCEAQGNPIPKLNCSRKGDGASLPIGDLRPVRREVAGTYLCRATSARG) form the Ig-like C2-type 5 domain. A helical transmembrane segment spans residues 481–503 (DIVIPVVAVTLILGALGTAGYVY). At 504–535 (NYQRKIQKYELQKARKAQEEAALKLNAQSTPP) the chain is on the cytoplasmic side. The residue at position 533 (threonine 533) is a Phosphothreonine.

It belongs to the immunoglobulin superfamily. ICAM family. In terms of assembly, homodimer. Interacts with MUC1 and promotes cell aggregation in epithelial cells. Interacts with ARHGEF26/SGEF. Interacts (on T cell side) with CD81, CD247 and CD9 at immunological synapses between antigen-presenting cells and T cells. In terms of processing, monoubiquitinated, which is promoted by MARCH9 and leads to endocytosis.

The protein resides in the membrane. In terms of biological role, ICAM proteins are ligands for the leukocyte adhesion protein LFA-1 (integrin alpha-L/beta-2). During leukocyte trans-endothelial migration, ICAM1 engagement promotes the assembly of endothelial apical cups through ARHGEF26/SGEF and RHOG activation. The sequence is that of Intercellular adhesion molecule 1 (ICAM1) from Bos taurus (Bovine).